We begin with the raw amino-acid sequence, 151 residues long: SsrA-binding protein (151 aa).

This sequence belongs to the SmpB family.

The protein resides in the cytoplasm. Functionally, required for rescue of stalled ribosomes mediated by trans-translation. Binds to transfer-messenger RNA (tmRNA), required for stable association of tmRNA with ribosomes. tmRNA and SmpB together mimic tRNA shape, replacing the anticodon stem-loop with SmpB. tmRNA is encoded by the ssrA gene; the 2 termini fold to resemble tRNA(Ala) and it encodes a 'tag peptide', a short internal open reading frame. During trans-translation Ala-aminoacylated tmRNA acts like a tRNA, entering the A-site of stalled ribosomes, displacing the stalled mRNA. The ribosome then switches to translate the ORF on the tmRNA; the nascent peptide is terminated with the 'tag peptide' encoded by the tmRNA and targeted for degradation. The ribosome is freed to recommence translation, which seems to be the essential function of trans-translation. The protein is SsrA-binding protein of Geotalea uraniireducens (strain Rf4) (Geobacter uraniireducens).